The sequence spans 959 residues: MTTPTRATLEKALKSDQKLVNSATQIAKDLTAKAYDISALAEALGFALSSPDMEERVAGTNLLSAVLIALPQDLLQERQLEFLSTFYMDRLRDHHNVMPAIIDGIDALVHMKALPRAQIPQILQSFFEHTTCQSQTRSDRTKLFHIFQYLTENFQDELQAMAGDFVYGLINSIDGERDPRNLDIIFSFMPEFLSTYPLLHLAEEMFEIFACYFPIDFNPSKQDPAAITRDELSKKLTNCLVANNEFAEGTVVLAIEKLESELLVAKLDSIELLHQAAVKFPPSVLEPHFDQIWQALKTETFPGNDNEEILKASLKALSALLERAAHIPDISHSYQSSILGVILPHLSDVNQRLFHPATGIALVCVSGDAPYAADKILNSFLLKLQAADASSEQRIKIYYIVSQVYKLSALRGSLQKLDTTIRESVQDDVIASLRLIEQEEFDAKKEDLELQKAALSVLNESAPLLNEKQRALIYKALVQLVSHPSIDIDFTTLTVSLGALQPVEVQSNFIDVCVRNFEIFSTFVKRKIYTNLLPLMPQIAFTQRILDLVMTQTFNDTTAEPVRLLALEALNKLLLLADQRFIVDVQQESNLLHKLIELGQKTEGLSMQSLEQIAGALSRITQQLPLSEQSAIVSEYLPGLNLSQSADLYITKGLLGYLHKDITLDDHFERLLTDLTQLSLNSDNEQLRVIAHHLLCSMVNKMESNPANLRKVKKITEQLKVAIKKGDVRAVEILAWVGKGLVVAGFDEAADVVGDLSDLLKHPSLSTAAALGFDIIAAEYPELDLPVVKFLYKQKLFHTIMGKMGSKLANYCVHHLKAFVYVLKATPQAVIKLNIEQLGPLLFKSLEEHNEAQSLCIALGICEKFVAQQDTYFQGHLAHLIPSCLELSKYKAQHTMQVRIAALQLLYDVTKYPTFVLLPHKVDVTLALAAALDDPKRLVRNTAVKARNAWYLVGAPSPN.

HEAT repeat units follow at residues 794-828, 832-871, 874-915, and 918-956; these read QKLF…ATPQ, KLNI…QQDT, QGHL…YPTF, and LPHK…VGAP.

This sequence belongs to the MET18/MMS19 family. Component of the CIA complex. Interacts with Xpd and galla-2. Binds to microtubules. In terms of tissue distribution, expressed in embryos (at protein level).

Its subcellular location is the cytoplasm. It localises to the cytoskeleton. It is found in the spindle. The protein localises to the nucleus. The protein resides in the midbody. Key component of the cytosolic iron-sulfur protein assembly (CIA) complex, a multiprotein complex that mediates the incorporation of iron-sulfur cluster into apoproteins specifically involved in DNA metabolism and genomic integrity. In the CIA complex, MMS19 acts as an adapter between early-acting CIA components and a subset of cellular target iron-sulfur proteins. Essential for diploid cell cycles, organ growth and development. Regulates mitosis by binding to Xpd and thereby competing with the Xpd-mediated repression on the Cdk-activating kinase (CAK) complex. Regulates the centrosomal localization of the MT regulator tacc, a downstream target of aurA kinase. Binds to microtubules (MT). Regulates spindle and astral MT growth, MT stability and bundling. In neuroblasts, necessary for timely and coordinated spindle assembly and orientation which is necessary for mitotic progression. In young embryos, the maternal protein is important for progression through mitosis. This is MMS19 nucleotide excision repair protein from Drosophila melanogaster (Fruit fly).